Reading from the N-terminus, the 734-residue chain is Platelet glycoprotein Ib alpha chain (734 aa).

Positions 1 to 16 are cleaved as a signal peptide; sequence MALLILLFLLPSPLHS. In terms of domain architecture, LRRNT spans 17–47; sequence QHTCSISKVTSLLEVNCENKKLTALPADLPA. The Extracellular portion of the chain corresponds to 17–612; the sequence is QHTCSISKVT…LNSDFCCFLP (596 aa). Cys20 and Cys33 are joined by a disulfide. LRR repeat units lie at residues 48–69, 72–93, 94–115, 117–140, 141–162, 165–188, and 189–210; these read DTGILHLGENQLGTFSTASLVH, HLTYLYLDRCELTSLQTNGKLI, KLENLDLSHNNLKSLPSLGWAL, ALTTLDVSFNKLGSLSPGVLDGLS, QLQELYLQNNDLKSLPPGLLLP, KLKKLNLANNKLRELPSGLLDGLE, and DLDTLYLQRNWLRTIPKGFFGT. An LRRCT domain is found at 221–282; it reads NSWYCDCEIL…YSYPGKGCPT (62 aa). 2 disulfides stabilise this stretch: Cys225/Cys264 and Cys227/Cys280. Tyr292 is modified (sulfotyrosine). O-linked (GalNAc...) threonine glycans are attached at residues Thr301, Thr311, Thr315, and Thr316. Residue Ser335 is glycosylated (O-linked (GalNAc...) serine). 4 O-linked (GalNAc...) threonine glycosylation sites follow: Thr339, Thr348, Thr358, and Thr377. Residue Ser382 is glycosylated (O-linked (GalNAc...) serine). O-linked (GalNAc...) threonine glycosylation is found at Thr384, Thr385, and Thr405. 2 disordered regions span residues 406-429 and 460-526; these read STLTTPEHSTTPVPTTTILTTPEH and EPST…PEPS. O-linked (GalNAc...) threonine glycans are attached at residues Thr512, Thr516, Thr519, Thr530, Thr542, Thr546, Thr550, and Thr562. O-linked (GalNAc...) serine glycosylation is present at Ser572. Residue Thr573 is glycosylated (O-linked (GalNAc...) threonine). Residues 613–633 traverse the membrane as a helical segment; sequence LGFYVLGLLWLLFASVVLILL. At 634–734 the chain is on the cytoplasmic side; it reads LTWTWHVTPH…VGIRYSGHSL (101 aa). Residues Ser711 and Ser714 each carry the phosphoserine modification.

As to quaternary structure, two GP-Ib beta are disulfide-linked to one GP-Ib alpha. GP-IX is complexed with the GP-Ib heterodimer via a non covalent linkage. Interacts with FLNB. Interacts with FLNA (via filamin repeats 4, 9, 12, 17, 19, 21, and 23). O-glycosylated. Post-translationally, glycocalicin is the product of a proteolytic cleavage/shedding, catalyzed by ADAM17, which releases most of the extracellular domain. Binding sites for vWF and thrombin are in this part of the protein.

Its subcellular location is the membrane. In terms of biological role, GP-Ib, a surface membrane protein of platelets, participates in the formation of platelet plugs by binding to the A1 domain of vWF, which is already bound to the subendothelium. This chain is Platelet glycoprotein Ib alpha chain (Gp1ba), found in Mus musculus (Mouse).